Consider the following 681-residue polypeptide: Threonine--tRNA ligase (681 aa).

The TGS domain occupies 3-97; that stretch reads KQIQVTLPDG…EEDVQLALLT (95 aa). The tract at residues 279 to 576 is catalytic; the sequence is DHRVLGKQLD…LIEHYAGAFP (298 aa). Zn(2+)-binding residues include Cys-372, His-423, and His-553.

This sequence belongs to the class-II aminoacyl-tRNA synthetase family. Homodimer. It depends on Zn(2+) as a cofactor.

It is found in the cytoplasm. It carries out the reaction tRNA(Thr) + L-threonine + ATP = L-threonyl-tRNA(Thr) + AMP + diphosphate + H(+). Catalyzes the attachment of threonine to tRNA(Thr) in a two-step reaction: L-threonine is first activated by ATP to form Thr-AMP and then transferred to the acceptor end of tRNA(Thr). Also edits incorrectly charged L-seryl-tRNA(Thr). The protein is Threonine--tRNA ligase of Acidobacterium capsulatum (strain ATCC 51196 / DSM 11244 / BCRC 80197 / JCM 7670 / NBRC 15755 / NCIMB 13165 / 161).